Reading from the N-terminus, the 147-residue chain is uncharacterized protein (147 aa).

Positions 1–21 (MRTIFVGVLLLAIMGEGRLCA) are cleaved as a signal peptide.

This is an uncharacterized protein from Treponema pallidum (strain Nichols).